The sequence spans 254 residues: MSLTNKNVVFVAGLGGIGLDTSRELVKRDLKNLVILDRIDNPAAIAELKAINPKVTVTFYPYDVTVPVAETTKLLKTIFAQIKTIDVLINGAGILDDHQIERTIAVNYTGLVNTTTAILDFWDKRKGGPGGIICNIGSVTGFNAIYQVPVYSGSKAAVVNFTSSLAKLAPITGVTAYTVNPGITKTTLVHKFNSWLDVEPRVAEKLLEHPTQTSQQCAENFVKAIELNKNGAIWKLDLGTLESITWTKHWDSGI.

10–33 contributes to the NAD(+) binding site; sequence FVAGLGGIGLDTSRELVKRDLKNL. Serine 138 provides a ligand contact to substrate. The active-site Proton acceptor is the tyrosine 151.

This sequence belongs to the short-chain dehydrogenases/reductases (SDR) family. As to quaternary structure, homodimer.

It catalyses the reaction a primary alcohol + NAD(+) = an aldehyde + NADH + H(+). The enzyme catalyses a secondary alcohol + NAD(+) = a ketone + NADH + H(+). This Drosophila madeirensis (Fruit fly) protein is Alcohol dehydrogenase (Adh).